A 546-amino-acid chain; its full sequence is 2-succinyl-5-enolpyruvyl-6-hydroxy-3-cyclohexene-1-carboxylate synthase (546 aa).

Belongs to the TPP enzyme family. MenD subfamily. In terms of assembly, homodimer. Requires Mg(2+) as cofactor. The cofactor is Mn(2+). It depends on thiamine diphosphate as a cofactor.

The catalysed reaction is isochorismate + 2-oxoglutarate + H(+) = 5-enolpyruvoyl-6-hydroxy-2-succinyl-cyclohex-3-ene-1-carboxylate + CO2. The protein operates within quinol/quinone metabolism; 1,4-dihydroxy-2-naphthoate biosynthesis; 1,4-dihydroxy-2-naphthoate from chorismate: step 2/7. It functions in the pathway quinol/quinone metabolism; menaquinone biosynthesis. Functionally, catalyzes the thiamine diphosphate-dependent decarboxylation of 2-oxoglutarate and the subsequent addition of the resulting succinic semialdehyde-thiamine pyrophosphate anion to isochorismate to yield 2-succinyl-5-enolpyruvyl-6-hydroxy-3-cyclohexene-1-carboxylate (SEPHCHC). This is 2-succinyl-5-enolpyruvyl-6-hydroxy-3-cyclohexene-1-carboxylate synthase from Mycolicibacterium smegmatis (strain ATCC 700084 / mc(2)155) (Mycobacterium smegmatis).